We begin with the raw amino-acid sequence, 391 residues long: D-gluconate/D-galactonate dehydratase (391 aa).

Mg(2+) is bound at residue E198. The active-site Proton donor is the H200. 2 residues coordinate Mg(2+): E224 and E250. H300 (proton acceptor) is an active-site residue.

The protein belongs to the mandelate racemase/muconate lactonizing enzyme family. GaD subfamily. In terms of assembly, homooctamer. Mg(2+) is required as a cofactor.

It carries out the reaction D-gluconate = 2-dehydro-3-deoxy-D-gluconate + H2O. It catalyses the reaction D-galactonate = 2-dehydro-3-deoxy-D-galactonate + H2O. The protein operates within carbohydrate acid metabolism; D-gluconate degradation. Involved in the degradation of glucose and galactose via the nonphosphorylative variant of Entner-Doudoroff pathway. Catalyzes the dehydration of gluconate to produce 2-keto-3-deoxygluconate (KDG). It is also able to catalyze the dehydration of galactonate to produce 2-keto-3-deoxygalactonate (KDGal). The chain is D-gluconate/D-galactonate dehydratase from Picrophilus torridus (strain ATCC 700027 / DSM 9790 / JCM 10055 / NBRC 100828 / KAW 2/3).